Consider the following 148-residue polypeptide: Large ribosomal subunit protein uL13 (148 aa).

Belongs to the universal ribosomal protein uL13 family. In terms of assembly, part of the 50S ribosomal subunit.

This protein is one of the early assembly proteins of the 50S ribosomal subunit, although it is not seen to bind rRNA by itself. It is important during the early stages of 50S assembly. This chain is Large ribosomal subunit protein uL13, found in Sulfolobus acidocaldarius (strain ATCC 33909 / DSM 639 / JCM 8929 / NBRC 15157 / NCIMB 11770).